Here is a 612-residue protein sequence, read N- to C-terminus: Putative zinc metalloproteinase C607.06c (612 aa).

His-303 contributes to the Zn(2+) binding site. Glu-304 is a catalytic residue. 2 residues coordinate Zn(2+): His-307 and His-313. Residues 477–612 form the Jacalin-type lectin domain; the sequence is VYRSERYGLR…FMDSIGFFIK (136 aa).

It belongs to the peptidase M10B family. Zn(2+) serves as cofactor.

The protein is Putative zinc metalloproteinase C607.06c of Schizosaccharomyces pombe (strain 972 / ATCC 24843) (Fission yeast).